A 55-amino-acid polypeptide reads, in one-letter code: Large ribosomal subunit protein bL33 (55 aa).

This sequence belongs to the bacterial ribosomal protein bL33 family.

This chain is Large ribosomal subunit protein bL33, found in Ruegeria sp. (strain TM1040) (Silicibacter sp.).